The primary structure comprises 338 residues: Phenylalanine--tRNA ligase alpha subunit (338 aa).

Glutamate 252 is a Mg(2+) binding site.

It belongs to the class-II aminoacyl-tRNA synthetase family. Phe-tRNA synthetase alpha subunit type 1 subfamily. In terms of assembly, tetramer of two alpha and two beta subunits. The cofactor is Mg(2+).

The protein localises to the cytoplasm. It catalyses the reaction tRNA(Phe) + L-phenylalanine + ATP = L-phenylalanyl-tRNA(Phe) + AMP + diphosphate + H(+). This Pseudomonas fluorescens (strain ATCC BAA-477 / NRRL B-23932 / Pf-5) protein is Phenylalanine--tRNA ligase alpha subunit.